The primary structure comprises 213 residues: ATP synthase peripheral stalk subunit OSCP, mitochondrial (213 aa).

The transit peptide at Met-1 to Pro-23 directs the protein to the mitochondrion. The SIFI-degron motif lies at Ala-5–Pro-23. Lys-54, Lys-60, Lys-70, and Lys-73 each carry N6-acetyllysine. Lys-90 is modified (N6-succinyllysine). Lys-158 and Lys-162 each carry N6-acetyllysine; alternate. An N6-succinyllysine; alternate mark is found at Lys-158 and Lys-162. 3 positions are modified to N6-acetyllysine: Lys-172, Lys-176, and Lys-192. Position 199 is an N6-succinyllysine (Lys-199).

It belongs to the ATPase delta chain family. In terms of assembly, component of the ATP synthase complex composed at least of ATP5F1A/subunit alpha, ATP5F1B/subunit beta, ATP5MC1/subunit c (homooctomer), MT-ATP6/subunit a, MT-ATP8/subunit 8, ATP5ME/subunit e, ATP5MF/subunit f, ATP5MG/subunit g, ATP5MK/subunit k, ATP5MJ/subunit j, ATP5F1C/subunit gamma, ATP5F1D/subunit delta, ATP5F1E/subunit epsilon, ATP5PF/subunit F6, ATP5PB/subunit b, ATP5PD/subunit d, ATP5PO/subunit OSCP. ATP synthase complex consists of a soluble F(1) head domain (subunits alpha(3) and beta(3)) - the catalytic core - and a membrane F(0) domain - the membrane proton channel (subunits c, a, 8, e, f, g, k and j). These two domains are linked by a central stalk (subunits gamma, delta, and epsilon) rotating inside the F1 region and a stationary peripheral stalk (subunits F6, b, d, and OSCP). In terms of processing, acetylation at Lys-162 decreases ATP production. Deacetylated by SIRT3. Post-translationally, in response to mitochondrial stress, the precursor protein is ubiquitinated by the SIFI complex in the cytoplasm before mitochondrial import, leading to its degradation. Within the SIFI complex, UBR4 initiates ubiquitin chain that are further elongated or branched by KCMF1.

The protein localises to the mitochondrion. It is found in the mitochondrion inner membrane. In terms of biological role, subunit OSCP, of the mitochondrial membrane ATP synthase complex (F(1)F(0) ATP synthase or Complex V) that produces ATP from ADP in the presence of a proton gradient across the membrane which is generated by electron transport complexes of the respiratory chain. ATP synthase complex consist of a soluble F(1) head domain - the catalytic core - and a membrane F(1) domain - the membrane proton channel. These two domains are linked by a central stalk rotating inside the F(1) region and a stationary peripheral stalk. During catalysis, ATP synthesis in the catalytic domain of F(1) is coupled via a rotary mechanism of the central stalk subunits to proton translocation. In vivo, can only synthesize ATP although its ATP hydrolase activity can be activated artificially in vitro. Part of the complex F(0) domain. Part of the complex F(0) domain and the peripheric stalk, which acts as a stator to hold the catalytic alpha(3)beta(3) subcomplex and subunit a/ATP6 static relative to the rotary elements. In Homo sapiens (Human), this protein is ATP synthase peripheral stalk subunit OSCP, mitochondrial.